Reading from the N-terminus, the 345-residue chain is NADH-quinone oxidoreductase subunit H (345 aa).

Transmembrane regions (helical) follow at residues 13 to 33 (VIILAQTLAVVAFVMISLLFL), 84 to 104 (FILAPLTSFVLAMIAWAVIPF), 115 to 135 (VAILYVFAVSSLEVYGVIMGG), 161 to 181 (IGLIIIGVILSTGSMNFGDIV), 190 to 210 (LFNWYWLPHFPMVFLFFISCL), 248 to 268 (YIAIFLMCALTSLLFFGGWLS), 277 to 297 (PLWMVAKMAFFFFLFAMVKAI), and 309 to 329 (LGWKVFLPFSLIWVVFVAFAA).

Belongs to the complex I subunit 1 family. NDH-1 is composed of 14 different subunits. Subunits NuoA, H, J, K, L, M, N constitute the membrane sector of the complex.

Its subcellular location is the cell inner membrane. It catalyses the reaction a quinone + NADH + 5 H(+)(in) = a quinol + NAD(+) + 4 H(+)(out). Its function is as follows. NDH-1 shuttles electrons from NADH, via FMN and iron-sulfur (Fe-S) centers, to quinones in the respiratory chain. The immediate electron acceptor for the enzyme in this species is believed to be ubiquinone. Couples the redox reaction to proton translocation (for every two electrons transferred, four hydrogen ions are translocated across the cytoplasmic membrane), and thus conserves the redox energy in a proton gradient. This subunit may bind ubiquinone. The polypeptide is NADH-quinone oxidoreductase subunit H (Ruegeria sp. (strain TM1040) (Silicibacter sp.)).